Here is a 115-residue protein sequence, read N- to C-terminus: Parathyroid hormone (115 aa).

The N-terminal stretch at 1 to 25 is a signal peptide; sequence MMSAKDTVKVMVVMLAICFLARSDG. The propeptide occupies 26–31; the sequence is KPIKKR. Positions 51 to 69 are important for receptor binding; the sequence is RVEWLRKKLQDVHNFVALG. The segment at 75-98 is disordered; the sequence is RDGGSQRPRKKEDNVLVESHQKSL.

Belongs to the parathyroid hormone family. In terms of assembly, interacts with PTH1R (via N-terminal extracellular domain).

The protein localises to the secreted. Parathyroid hormone elevates calcium level by dissolving the salts in bone and preventing their renal excretion. Acts by binding to its receptor, PTH1R, activating G protein-coupled receptor signaling. Stimulates [1-14C]-2-deoxy-D-glucose (2DG) transport and glycogen synthesis in osteoblastic cells. This is Parathyroid hormone (PTH) from Sus scrofa (Pig).